The chain runs to 508 residues: Small ribosomal subunit protein mS47 (508 aa).

The protein belongs to the enoyl-CoA hydratase/isomerase family. Mitochondrion-specific ribosomal protein mS47 subfamily. As to quaternary structure, component of the mitochondrial small ribosomal subunit (mt-SSU). Mature N.crassa 74S mitochondrial ribosomes consist of a small (37S) and a large (54S) subunit. The 37S small subunit contains a 16S ribosomal RNA (16S mt-rRNA) and 32 different proteins. The 54S large subunit contains a 23S rRNA (23S mt-rRNA) and 42 different proteins. mS47 forms a protuberance of the N.crassa mitoribosome and retains a solvent-exposed cavity liekly capable of accommodating a substrate, in accordance with it being an active enzyme as well as an integral constituent of the mitoribosome.

The protein resides in the mitochondrion. It carries out the reaction 3-hydroxy-2-methylpropanoyl-CoA + H2O = 3-hydroxy-2-methylpropanoate + CoA + H(+). Functionally, component of the mitochondrial ribosome (mitoribosome), a dedicated translation machinery responsible for the synthesis of mitochondrial genome-encoded proteins, including at least some of the essential transmembrane subunits of the mitochondrial respiratory chain. The mitoribosomes are attached to the mitochondrial inner membrane and translation products are cotranslationally integrated into the membrane. mS47 has enzymatic activity in vitro, and is able to catalyze the specific hydrolysis of 3-hydroxyisobutyryl-CoA (HIBYL-CoA). However, because the turnover rate of mS47 is only a fraction of that of the homologous mammalian enzyme, the physiological function of this activity remains unclear. This is Small ribosomal subunit protein mS47 (ehd3) from Neurospora crassa (strain ATCC 24698 / 74-OR23-1A / CBS 708.71 / DSM 1257 / FGSC 987).